The chain runs to 340 residues: MRPILLQGHERSLNQIRFNHDGDLLFSVAKDKILCAWYSANGERLGTYHGHQGALWTVDVSPGTVLLATGAADNTVRLWNAKSGECVKVWDFPTAVKRVEFSPDGSRLLAVTEKRMGYLGTIVVFDVRYGDGEGNNLDDQTDEPSLKITCEQSKATVAGWSFLGKYIIAGHEDGSVSQYDSKTGEQLQNVQAHEFDYQINDLQFSADRTYFITASKDKSAKIISCRDLQVMKTFVADTPLNTAAITPKKDFVILGGGQAAMDVTTTSARQGKFEARFYHKIFEDEIGRVRGHFGPLNTIAVHPAGTGYASGGEDGYVRVHHFDKPYFDFMYEVEREKARR.

WD repeat units lie at residues 8-47 (GHER…RLGT), 50-89 (GHQG…CVKV), 91-135 (DFPT…GEGN), 150-189 (CEQS…QLQN), 194-233 (EFDY…VMKT), and 291-330 (GHFG…FDFM).

This sequence belongs to the eIF-3 subunit I family. In terms of assembly, component of the eukaryotic translation initiation factor 3 (eIF-3) complex.

Its subcellular location is the cytoplasm. Functionally, component of the eukaryotic translation initiation factor 3 (eIF-3) complex, which is involved in protein synthesis of a specialized repertoire of mRNAs and, together with other initiation factors, stimulates binding of mRNA and methionyl-tRNAi to the 40S ribosome. The eIF-3 complex specifically targets and initiates translation of a subset of mRNAs involved in cell proliferation. The polypeptide is Eukaryotic translation initiation factor 3 subunit I (Coccidioides immitis (strain RS) (Valley fever fungus)).